The sequence spans 205 residues: Ras-related protein Rab-1A (205 aa).

N-acetylserine is present on S2. The GTP site is built by S20, G21, G23, K24, S25, C26, E38, and T43. Residue S25 participates in Mg(2+) binding. The Switch 1 signature appears at 34-48 (DTYTESYISTIGVDF). T43 contributes to the Mg(2+) binding site. Residues K49 and K61 each participate in a glycyl lysine isopeptide (Lys-Gly) (interchain with G-Cter in ubiquitin) cross-link. Position 66 (D66) interacts with Mg(2+). The Switch 2 motif lies at 66-83 (DTAGQERFRTITSSYYRG). Residues G69, N124, K125, D127, A155, and K156 each contribute to the GTP site. The interval 178–205 (PGATAGGAEKSNVKIQSTPVKQSGGGCC) is disordered. A Phosphoserine modification is found at S194. 2 S-geranylgeranyl cysteine lipidation sites follow: C204 and C205.

This sequence belongs to the small GTPase superfamily. Rab family. As to quaternary structure, may interact with YIPF5. Interacts with C9orf72; the interaction mediates recruitment of RAB1A to the ATG1/ULK1 kinase complex. Interacts with GDI1; this promotes dissociation from membranes. Mg(2+) serves as cofactor. In terms of processing, phosphorylated by CDK1 kinase during mitosis. Ubiquitinated via 'Lys-11'-linked ubiquitination on Lys-49 and Lys-61; impairing the recruitment of guanosine diphosphate (GDP) dissociation inhibitor 1/GDI1.

It localises to the golgi apparatus. The protein localises to the endoplasmic reticulum. Its subcellular location is the early endosome. The protein resides in the cytoplasm. It is found in the cytosol. It localises to the membrane. The protein localises to the melanosome. The enzyme catalyses GTP + H2O = GDP + phosphate + H(+). With respect to regulation, regulated by guanine nucleotide exchange factors (GEFs) which promote the exchange of bound GDP for free GTP. Regulated by GTPase activating proteins (GAPs) which increase the GTP hydrolysis activity. Inhibited by GDP dissociation inhibitors (GDIs). In terms of biological role, the small GTPases Rab are key regulators of intracellular membrane trafficking, from the formation of transport vesicles to their fusion with membranes. Rabs cycle between an inactive GDP-bound form and an active GTP-bound form that is able to recruit to membranes different sets of downstream effectors directly responsible for vesicle formation, movement, tethering and fusion. RAB1A regulates vesicular protein transport from the endoplasmic reticulum (ER) to the Golgi compartment and on to the cell surface, and plays a role in IL-8 and growth hormone secretion. Required to modulate the compacted morphology of the Golgi. Regulates the level of CASR present at the cell membrane. Plays a role in cell adhesion and cell migration, via its role in protein trafficking. Plays a role in autophagosome assembly and cellular defense reactions against pathogenic bacteria. Plays a role in microtubule-dependent protein transport by early endosomes and in anterograde melanosome transport. The sequence is that of Ras-related protein Rab-1A (RAB1A) from Canis lupus familiaris (Dog).